Consider the following 324-residue polypeptide: tRNA U34 carboxymethyltransferase (324 aa).

Carboxy-S-adenosyl-L-methionine contacts are provided by residues Lys-92, Trp-106, Lys-111, Gly-131, Asp-153–Thr-155, Ile-182–Glu-183, Met-197, Tyr-201, and Arg-316.

Belongs to the class I-like SAM-binding methyltransferase superfamily. CmoB family. As to quaternary structure, homotetramer.

The catalysed reaction is carboxy-S-adenosyl-L-methionine + 5-hydroxyuridine(34) in tRNA = 5-carboxymethoxyuridine(34) in tRNA + S-adenosyl-L-homocysteine + H(+). Its function is as follows. Catalyzes carboxymethyl transfer from carboxy-S-adenosyl-L-methionine (Cx-SAM) to 5-hydroxyuridine (ho5U) to form 5-carboxymethoxyuridine (cmo5U) at position 34 in tRNAs. This Proteus mirabilis (strain HI4320) protein is tRNA U34 carboxymethyltransferase.